Here is a 200-residue protein sequence, read N- to C-terminus: Large ribosomal subunit protein bL9 (200 aa).

Belongs to the bacterial ribosomal protein bL9 family.

Functionally, binds to the 23S rRNA. This is Large ribosomal subunit protein bL9 from Ruegeria pomeroyi (strain ATCC 700808 / DSM 15171 / DSS-3) (Silicibacter pomeroyi).